Consider the following 188-residue polypeptide: uncharacterized protein (188 aa).

This is an uncharacterized protein from Saccharomyces cerevisiae (strain ATCC 204508 / S288c) (Baker's yeast).